The chain runs to 395 residues: Major outer membrane porin, serovar F (395 aa).

The first 22 residues, 1–22 (MKKLLKSVLVFAALSSASSLQA), serve as a signal peptide directing secretion.

This sequence belongs to the chlamydial porin (CP) (TC 1.B.2) family. In terms of assembly, part of a disulfide cross-linked outer membrane complex (COMC) composed of the major outer membrane porin (MOMP), the small cysteine-rich protein (OmcA) and the large cysteine-rich periplasmic protein (OmcB).

Its subcellular location is the cell outer membrane. Its function is as follows. In elementary bodies (EBs, the infectious stage, which is able to survive outside the host cell) provides the structural integrity of the outer envelope through disulfide cross-links with the small cysteine-rich protein and the large cysteine-rich periplasmic protein. It has been described in publications as the Sarkosyl-insoluble COMC (Chlamydia outer membrane complex), and serves as the functional equivalent of peptidoglycan. Permits diffusion of specific solutes through the outer membrane. This chain is Major outer membrane porin, serovar F (ompA), found in Chlamydia trachomatis.